The following is a 240-amino-acid chain: Arylmalonate decarboxylase (240 aa).

It carries out the reaction 2-aryl-2-methylmalonate + H(+) = 2-arylpropionate + CO2. The polypeptide is Arylmalonate decarboxylase (Bordetella bronchiseptica (Alcaligenes bronchisepticus)).